The following is a 466-amino-acid chain: 3-isopropylmalate dehydratase large subunit 1 (466 aa).

Residues C347, C407, and C410 each contribute to the [4Fe-4S] cluster site.

It belongs to the aconitase/IPM isomerase family. LeuC type 1 subfamily. As to quaternary structure, heterodimer of LeuC and LeuD. The cofactor is [4Fe-4S] cluster.

The catalysed reaction is (2R,3S)-3-isopropylmalate = (2S)-2-isopropylmalate. The protein operates within amino-acid biosynthesis; L-leucine biosynthesis; L-leucine from 3-methyl-2-oxobutanoate: step 2/4. Its function is as follows. Catalyzes the isomerization between 2-isopropylmalate and 3-isopropylmalate, via the formation of 2-isopropylmaleate. The sequence is that of 3-isopropylmalate dehydratase large subunit 1 from Salmonella choleraesuis (strain SC-B67).